Reading from the N-terminus, the 92-residue chain is Defensin (92 aa).

The signal sequence occupies residues 1-20; that stretch reads MKFFVLVAIAFALLACVAQA. Positions 21–52 are excised as a propeptide; that stretch reads QPVSDVDPIPEDHVLVHEDAHQEVLQHSRQKR. 3 disulfide bridges follow: Cys55-Cys82, Cys68-Cys88, and Cys72-Cys90.

It belongs to the invertebrate defensin family. Type 1 subfamily. In terms of tissue distribution, hemolymph (at protein level).

It is found in the secreted. Its function is as follows. Responsible for the anti Gram-positive activity of immune hemolymph. Expressed in the absence of immune challenge during metamorphosis. The polypeptide is Defensin (Def) (Drosophila melanogaster (Fruit fly)).